A 326-amino-acid polypeptide reads, in one-letter code: Peroxidase 39 (326 aa).

Positions 1 to 23 are cleaved as a signal peptide; sequence MTRFGLALLMILVIQGLVTFSEA. Cystine bridges form between Cys34-Cys114, Cys67-Cys72, Cys120-Cys322, and Cys199-Cys232. His65 (proton acceptor) is an active-site residue. Positions 66, 69, 71, 73, and 75 each coordinate Ca(2+). N-linked (GlcNAc...) asparagine glycosylation occurs at Asn79. Pro162 serves as a coordination point for substrate. Asn167 is a glycosylation site (N-linked (GlcNAc...) asparagine). Position 192 (His192) interacts with heme b. Thr193 lines the Ca(2+) pocket. Asn208 and Asn238 each carry an N-linked (GlcNAc...) asparagine glycan. Positions 245, 248, and 253 each coordinate Ca(2+).

The protein belongs to the peroxidase family. Classical plant (class III) peroxidase subfamily. It depends on heme b as a cofactor. Ca(2+) is required as a cofactor. As to expression, slightly expressed in roots.

It is found in the secreted. It carries out the reaction 2 a phenolic donor + H2O2 = 2 a phenolic radical donor + 2 H2O. In terms of biological role, removal of H(2)O(2), oxidation of toxic reductants, biosynthesis and degradation of lignin, suberization, auxin catabolism, response to environmental stresses such as wounding, pathogen attack and oxidative stress. These functions might be dependent on each isozyme/isoform in each plant tissue. This chain is Peroxidase 39 (PER39), found in Arabidopsis thaliana (Mouse-ear cress).